We begin with the raw amino-acid sequence, 362 residues long: Peptide chain release factor 1 (362 aa).

Residue Gln237 is modified to N5-methylglutamine.

The protein belongs to the prokaryotic/mitochondrial release factor family. In terms of processing, methylated by PrmC. Methylation increases the termination efficiency of RF1.

Its subcellular location is the cytoplasm. Its function is as follows. Peptide chain release factor 1 directs the termination of translation in response to the peptide chain termination codons UAG and UAA. The polypeptide is Peptide chain release factor 1 (Aeromonas salmonicida (strain A449)).